The following is a 102-amino-acid chain: Large ribosomal subunit protein bL21 (102 aa).

This sequence belongs to the bacterial ribosomal protein bL21 family. In terms of assembly, part of the 50S ribosomal subunit. Contacts protein L20.

Functionally, this protein binds to 23S rRNA in the presence of protein L20. The polypeptide is Large ribosomal subunit protein bL21 (Myxococcus xanthus (strain DK1622)).